We begin with the raw amino-acid sequence, 347 residues long: 4-hydroxy-2-oxovalerate aldolase 2 (347 aa).

A Pyruvate carboxyltransferase domain is found at 7–259; that stretch reads VRITDTSLRD…KTGIDFFDIA (253 aa). A substrate-binding site is contributed by 15–16; it reads RD. A Mn(2+)-binding site is contributed by aspartate 16. The active-site Proton acceptor is the histidine 19. Residues serine 169 and histidine 198 each coordinate substrate. The Mn(2+) site is built by histidine 198 and histidine 200. Tyrosine 289 provides a ligand contact to substrate.

The protein belongs to the 4-hydroxy-2-oxovalerate aldolase family.

The catalysed reaction is (S)-4-hydroxy-2-oxopentanoate = acetaldehyde + pyruvate. The sequence is that of 4-hydroxy-2-oxovalerate aldolase 2 from Mycobacterium ulcerans (strain Agy99).